The following is a 276-amino-acid chain: 1-(5-phosphoribosyl)-5-[(5-phosphoribosylamino)methylideneamino] imidazole-4-carboxamide isomerase (276 aa).

This sequence belongs to the HisA/HisF family.

The protein resides in the cytoplasm. It carries out the reaction 1-(5-phospho-beta-D-ribosyl)-5-[(5-phospho-beta-D-ribosylamino)methylideneamino]imidazole-4-carboxamide = 5-[(5-phospho-1-deoxy-D-ribulos-1-ylimino)methylamino]-1-(5-phospho-beta-D-ribosyl)imidazole-4-carboxamide. It participates in amino-acid biosynthesis; L-histidine biosynthesis; L-histidine from 5-phospho-alpha-D-ribose 1-diphosphate: step 4/9. This is 1-(5-phosphoribosyl)-5-[(5-phosphoribosylamino)methylideneamino] imidazole-4-carboxamide isomerase (HIS6) from Debaryomyces hansenii (strain ATCC 36239 / CBS 767 / BCRC 21394 / JCM 1990 / NBRC 0083 / IGC 2968) (Yeast).